The sequence spans 216 residues: 3-isopropylmalate dehydratase small subunit (216 aa).

It belongs to the LeuD family. LeuD type 1 subfamily. Heterodimer of LeuC and LeuD.

It catalyses the reaction (2R,3S)-3-isopropylmalate = (2S)-2-isopropylmalate. It participates in amino-acid biosynthesis; L-leucine biosynthesis; L-leucine from 3-methyl-2-oxobutanoate: step 2/4. Its function is as follows. Catalyzes the isomerization between 2-isopropylmalate and 3-isopropylmalate, via the formation of 2-isopropylmaleate. This is 3-isopropylmalate dehydratase small subunit from Cupriavidus pinatubonensis (strain JMP 134 / LMG 1197) (Cupriavidus necator (strain JMP 134)).